The chain runs to 201 residues: LexA repressor 1 (201 aa).

The segment at residues 27–47 is a DNA-binding region (H-T-H motif); sequence LAEIAQAFGFASRNAAQKHVQ. Residues S122 and K159 each act as for autocatalytic cleavage activity in the active site.

The protein belongs to the peptidase S24 family. As to quaternary structure, homodimer.

It carries out the reaction Hydrolysis of Ala-|-Gly bond in repressor LexA.. In terms of biological role, represses a number of genes involved in the response to DNA damage (SOS response), including recA and lexA. In the presence of single-stranded DNA, RecA interacts with LexA causing an autocatalytic cleavage which disrupts the DNA-binding part of LexA, leading to derepression of the SOS regulon and eventually DNA repair. The sequence is that of LexA repressor 1 from Xanthomonas campestris pv. campestris (strain ATCC 33913 / DSM 3586 / NCPPB 528 / LMG 568 / P 25).